The sequence spans 1217 residues: WD repeat-containing protein on Y chromosome (1217 aa).

WD repeat units follow at residues 155–199 (EDMT…LRSA), 323–362 (RIPL…EPSA), 366–405 (GHNG…LLQT), 456–495 (THAA…RKII), 508–547 (TIDI…VVRN), 595–635 (FHTD…RRYN), 740–779 (KVGD…IPEA), and 823–862 (GHLK…LGTL). Disordered regions lie at residues 910–929 (QVKR…VEDT) and 1033–1217 (AGGQ…KDKP). Positions 919–929 (EREDEGEVEDT) are enriched in acidic residues. Polar residues-rich tracts occupy residues 1041 to 1054 (RASS…TNSI), 1085 to 1107 (FGPN…SQLK), and 1137 to 1179 (PVST…TSAN). Over residues 1181–1190 (KPDIMPVKIK) the composition is skewed to low complexity. Over residues 1198-1210 (RNTAPVQITTSIA) the composition is skewed to polar residues.

The sequence is that of WD repeat-containing protein on Y chromosome from Drosophila mojavensis (Fruit fly).